A 108-amino-acid chain; its full sequence is UPF0060 membrane protein YnfA (108 aa).

Topologically, residues 1–5 (MIKTT) are periplasmic. A helical transmembrane segment spans residues 6-26 (LLFFATALCEIIGCFLPWLWL). Topologically, residues 27 to 30 (KRNA) are cytoplasmic. Residues 31-51 (SIWLLLPAGISLALFVWLLTL) form a helical membrane-spanning segment. Residues 52-60 (HPAASGRIY) lie on the Periplasmic side of the membrane. The helical transmembrane segment at 61-81 (AAYGGVYVCTALMWLRVVDGV) threads the bilayer. Topologically, residues 82-84 (KLT) are cytoplasmic. A helical transmembrane segment spans residues 85 to 105 (LYDWTGALIALCGMLIIVAGW). Residues 106-108 (GRT) are Periplasmic-facing.

This sequence belongs to the UPF0060 family.

The protein resides in the cell inner membrane. This Shigella dysenteriae serotype 1 (strain Sd197) protein is UPF0060 membrane protein YnfA.